A 285-amino-acid polypeptide reads, in one-letter code: Phosphatase YwpJ (285 aa).

D7 functions as the Nucleophile in the catalytic mechanism. Position 7 (D7) interacts with Mg(2+). L8 serves as a coordination point for phosphate. Mg(2+) is bound at residue D9. Residues 41-42 (TG) and K214 each bind phosphate. Mg(2+) is bound by residues D237 and S238. Residues N240 and 282–283 (KH) each bind phosphate.

The protein belongs to the HAD-like hydrolase superfamily. Cof family. Mg(2+) is required as a cofactor.

Its function is as follows. Catalyzes the dephosphorylation of phosphorylated 5-6 carbon sugars and monophosphate nucleotides (NMP) in vitro. To a lesser extent, dephosphorylates flavin mononucleotide (FMN) in vitro. The polypeptide is Phosphatase YwpJ (ywpJ) (Bacillus subtilis (strain 168)).